Consider the following 121-residue polypeptide: Two-component response regulator ORR13 (121 aa).

Residues 5–121 (HVLVVDDTHV…ADVPRILNYI (117 aa)) form the Response regulatory domain. D55 is modified (4-aspartylphosphate).

This sequence belongs to the ARR family. Type-A subfamily. In terms of processing, two-component system major event consists of a His-to-Asp phosphorelay between a sensor histidine kinase (HK) and a response regulator (RR). In plants, the His-to-Asp phosphorelay involves an additional intermediate named Histidine-containing phosphotransfer protein (HPt). This multistep phosphorelay consists of a His-Asp-His-Asp sequential transfer of a phosphate group between first a His and an Asp of the HK protein, followed by the transfer to a conserved His of the HPt protein and finally the transfer to an Asp in the receiver domain of the RR protein. In terms of tissue distribution, expressed in flowers and panicles.

Its function is as follows. Functions as a response regulator involved in His-to-Asp phosphorelay signal transduction system. Phosphorylation of the Asp residue in the receiver domain activates the ability of the protein to promote the transcription of target genes. Type-A response regulators seem to act as negative regulators of the cytokinin signaling. The polypeptide is Two-component response regulator ORR13 (Oryza sativa subsp. japonica (Rice)).